The sequence spans 262 residues: tRNA (guanine-N(1)-)-methyltransferase (262 aa).

S-adenosyl-L-methionine contacts are provided by residues glycine 111 and 130–135; that span reads LGDFVL.

This sequence belongs to the RNA methyltransferase TrmD family. Homodimer.

It localises to the cytoplasm. The catalysed reaction is guanosine(37) in tRNA + S-adenosyl-L-methionine = N(1)-methylguanosine(37) in tRNA + S-adenosyl-L-homocysteine + H(+). Functionally, specifically methylates guanosine-37 in various tRNAs. The sequence is that of tRNA (guanine-N(1)-)-methyltransferase from Desulfitobacterium hafniense (strain Y51).